We begin with the raw amino-acid sequence, 288 residues long: ATP synthase gamma chain (288 aa).

The protein belongs to the ATPase gamma chain family. In terms of assembly, F-type ATPases have 2 components, CF(1) - the catalytic core - and CF(0) - the membrane proton channel. CF(1) has five subunits: alpha(3), beta(3), gamma(1), delta(1), epsilon(1). CF(0) has three main subunits: a, b and c.

It is found in the cell membrane. In terms of biological role, produces ATP from ADP in the presence of a proton gradient across the membrane. The gamma chain is believed to be important in regulating ATPase activity and the flow of protons through the CF(0) complex. This Staphylococcus aureus (strain Mu3 / ATCC 700698) protein is ATP synthase gamma chain.